Consider the following 666-residue polypeptide: tRNA 5-methylaminomethyl-2-thiouridine biosynthesis bifunctional protein MnmC (666 aa).

The interval 1-253 (MSSPFAPIIT…KRHMLCAYYE (253 aa)) is tRNA (mnm(5)s(2)U34)-methyltransferase. The interval 283-666 (VGGGLAGCFI…FLRKKIIQGP (384 aa)) is FAD-dependent cmnm(5)s(2)U34 oxidoreductase.

The protein in the N-terminal section; belongs to the methyltransferase superfamily. tRNA (mnm(5)s(2)U34)-methyltransferase family. It in the C-terminal section; belongs to the DAO family. The cofactor is FAD.

It localises to the cytoplasm. The enzyme catalyses 5-aminomethyl-2-thiouridine(34) in tRNA + S-adenosyl-L-methionine = 5-methylaminomethyl-2-thiouridine(34) in tRNA + S-adenosyl-L-homocysteine + H(+). Functionally, catalyzes the last two steps in the biosynthesis of 5-methylaminomethyl-2-thiouridine (mnm(5)s(2)U) at the wobble position (U34) in tRNA. Catalyzes the FAD-dependent demodification of cmnm(5)s(2)U34 to nm(5)s(2)U34, followed by the transfer of a methyl group from S-adenosyl-L-methionine to nm(5)s(2)U34, to form mnm(5)s(2)U34. This is tRNA 5-methylaminomethyl-2-thiouridine biosynthesis bifunctional protein MnmC from Legionella pneumophila (strain Corby).